The primary structure comprises 223 residues: NLP effector protein 3 (223 aa).

Positions 90 to 100 (AIMYVWYFPKD) match the Conserved undecapeptide motif motif. The Conserved heptapeptide motif signature appears at 107 to 113 (GHRHDWE).

It belongs to the Necrosis inducing protein (NPP1) family.

It is found in the secreted. Its subcellular location is the host cytoplasm. Probable secreted effector that may act as a pathogen-associated molecular pattern (PAMP) recognized by the plant immune system. Seems not to induce necrosis, neither in several susceptible or resistant Vitis species nor in the dicot model plant Nicotiana benthamiana. This Plasmopara viticola (Downy mildew of grapevine) protein is NLP effector protein 3.